The sequence spans 365 residues: Zinc finger protein lsy-2 (365 aa).

Residues 1–36 (MLTRRNAKQSQRNSADQSLSEFNSSSMTHGSNQSVY) form a disordered region. Polar residues predominate over residues 8 to 36 (KQSQRNSADQSLSEFNSSSMTHGSNQSVY). C2H2-type zinc fingers lie at residues 78–100 (HQCN…AVIH), 106–128 (FRCD…RSVH), 134–156 (HACP…LRTH), 264–287 (HDCP…TLEH), and 296–318 (FFCE…MSYH).

It is found in the nucleus speckle. Its function is as follows. Involved in transcriptional regulation. Required to specify left-right asymmetry of the ASE gustatory neurons, probably acting upstream of microRNA lsy-6. Involved in maintaining the distinction between somatic and germ cells, perhaps acting by repressing germ cell-specific genes in somatic cells. The protein is Zinc finger protein lsy-2 of Caenorhabditis elegans.